Consider the following 404-residue polypeptide: MHC class I-like protein MILL1 (404 aa).

An N-terminal signal peptide occupies residues 1-30 (MMLSRDLRAEAAVRLWIMFLLLEDLLGACA). The interval 59–150 (EVAGPHTLRY…VTGQKGQDKG (92 aa)) is alpha-1. Asn-98, Asn-102, and Asn-165 each carry an N-linked (GlcNAc...) asparagine glycan. Residues 151-242 (LHILQATLGC…SLRSEPLDTG (92 aa)) form an alpha-2 region. 2 cysteine pairs are disulfide-bonded: Cys-160–Cys-223 and Cys-262–Cys-322. Residues 224 to 338 (PAQLQRHLAS…GNIEKRAVIV (115 aa)) enclose the Ig-like C1-type domain. An alpha-3 region spans residues 243–342 (SPMVIVTFRN…KRAVIVNTVS (100 aa)). An N-linked (GlcNAc...) asparagine glycan is attached at Asn-323. The interval 343–373 (GEKTRQPSTSGVGGRVKKSLWTTMTTAFMVT) is connecting peptide. Residue Ser-374 is the site of GPI-anchor amidated serine attachment. Residues 375 to 404 (WTRKTGGDSTLLLLWWLLFFSTVLAVLTLV) constitute a propeptide, removed in mature form.

It belongs to the MHC class I family. Heterodimer with B2M. As to expression, detected in skin, esophagus, tongue, skin, muscle, uterus, ovary, testis and epididymis.

The protein resides in the cell membrane. The polypeptide is MHC class I-like protein MILL1 (Rattus norvegicus (Rat)).